Here is an 84-residue protein sequence, read N- to C-terminus: Acyl carrier protein MbtL (84 aa).

Positions 6-81 (STVSTTLLSI…ELEAAIAAKY (76 aa)) constitute a Carrier domain. S41 carries the post-translational modification O-(pantetheine 4'-phosphoryl)serine.

In terms of processing, 4'-phosphopantetheine is transferred from CoA to a specific serine of apo-ACP, leading to the activated holo-ACP form.

Its subcellular location is the cytoplasm. It functions in the pathway siderophore biosynthesis; mycobactin biosynthesis. Its function is as follows. Acyl carrier protein involved in the formation of acyl-S-ACP intermediates within the mycobactin biosynthesis process. The aliphatic chains carried by ACP are subsequently transferred on to the mycobactin core by MbtK. The protein is Acyl carrier protein MbtL (mbtL) of Mycobacterium bovis (strain ATCC BAA-935 / AF2122/97).